The following is a 344-amino-acid chain: MVKVGIVGGTGYTGVELLRLLAQHPQAEVVVITSRSEAGMPVADMYPNLRGHYDGLAFSVPDVKTLGACDVVFFATPHGVAHALAGELLAAGTKVIDLSADFRLQDPVEWAKWYGQPHGAPQLLEDAVYGLPEVNREQIRNARLIAVPGCYPTATQLGFLPLLEAGIADNTRLIADCKSGVSGAGRGLNIGSLYSEANESFKAYAVKGHRHLPEITQGLRRAAGGDIGLTFVPHLVPMIRGIHSTLYATVADRSVDLQALFEKRYADEPFVDVMPAGSHPETRSVRGANVCRIAVHRPQGGDLVVVLSVIDNLVKGASGQAVQNMNILFGLDERAGLSHAGMMP.

Cys150 is a catalytic residue.

The protein belongs to the NAGSA dehydrogenase family. Type 1 subfamily.

It localises to the cytoplasm. It catalyses the reaction N-acetyl-L-glutamate 5-semialdehyde + phosphate + NADP(+) = N-acetyl-L-glutamyl 5-phosphate + NADPH + H(+). It functions in the pathway amino-acid biosynthesis; L-arginine biosynthesis; N(2)-acetyl-L-ornithine from L-glutamate: step 3/4. In terms of biological role, catalyzes the NADPH-dependent reduction of N-acetyl-5-glutamyl phosphate to yield N-acetyl-L-glutamate 5-semialdehyde. This is N-acetyl-gamma-glutamyl-phosphate reductase from Pseudomonas syringae pv. syringae (strain B728a).